The sequence spans 33 residues: Mu-theraphotoxin-Ssp1a (33 aa).

Intrachain disulfides connect Cys2–Cys17, Cys9–Cys22, and Cys16–Cys29. At Leu33 the chain carries Leucine amide.

The protein belongs to the neurotoxin 10 (Hwtx-1) family. 22 (Htx-4) subfamily. Expressed by the venom gland.

Its subcellular location is the secreted. Gating modifier toxin that traps voltage-sensing domain II of voltage-gated sodium channels in the resting state without significantly altering the voltage-dependence of activation and inactivation, or delay in recovery from inactivation. Inhibits hNav1.7/SCN9A (IC(50)=134 nM), followed in rank order of potency by Nav1.6/SCN8A (IC(50)=191 nM), Nav1.2/SCN2A (IC(50)=239 nM), Nav1.3/SCN3A (IC(50)=547 nM) and Nav1.1/SCN1A (IC(50)=674 nM). Its binding to Nav1.2, Nav1.3 and Nav1.7 is slowly reversible and incomplete, with ~25% of Nav1.2, ~50% of Nav1.3 and ~40% of Nav1.7 channels recovering from block after a 30 minutes washout, respectively. Binds in the aqueous cleft formed between the S1-S2 and S3-S4 loops of each channel subtype, primarily targeting the S3-S4 loop. The protein is Mu-theraphotoxin-Ssp1a of Selenotypus sp. (Feather-legged tarantula).